We begin with the raw amino-acid sequence, 286 residues long: Bifunctional protein FolD (286 aa).

Residues 160–162 (GRS), Ser189, and Thr230 each bind NADP(+).

The protein belongs to the tetrahydrofolate dehydrogenase/cyclohydrolase family. Homodimer.

The enzyme catalyses (6R)-5,10-methylene-5,6,7,8-tetrahydrofolate + NADP(+) = (6R)-5,10-methenyltetrahydrofolate + NADPH. It catalyses the reaction (6R)-5,10-methenyltetrahydrofolate + H2O = (6R)-10-formyltetrahydrofolate + H(+). It functions in the pathway one-carbon metabolism; tetrahydrofolate interconversion. Functionally, catalyzes the oxidation of 5,10-methylenetetrahydrofolate to 5,10-methenyltetrahydrofolate and then the hydrolysis of 5,10-methenyltetrahydrofolate to 10-formyltetrahydrofolate. The chain is Bifunctional protein FolD from Chlamydia pneumoniae (Chlamydophila pneumoniae).